Here is a 1042-residue protein sequence, read N- to C-terminus: Sarcoplasmic/endoplasmic reticulum calcium ATPase 2 (1042 aa).

Residues 1–48 (MENAHTKTVEEVLGHFGVNESTGLSLEQVKKLKERWGSNELPAEEGKT) are Cytoplasmic-facing. The residue at position 38 (Ser38) is a Phosphoserine. A helical transmembrane segment spans residues 49–69 (LLELVIEQFEDLLVRILLLAA). Topologically, residues 70–89 (CISFVLAWFEEGEETITAFV) are lumenal. The helical transmembrane segment at 90-110 (EPFVILLILVANAIVGVWQER) threads the bilayer. At 111 to 253 (NAENAIEALK…QERTPLQQKL (143 aa)) the chain is on the cytoplasmic side. A helical transmembrane segment spans residues 254 to 273 (DEFGEQLSKVISLICIAVWI). The Lumenal portion of the chain corresponds to 274 to 295 (INIGHFNDPVHGGSWIRGAIYY). A 3'-nitrotyrosine mark is found at Tyr294 and Tyr295. The chain crosses the membrane as a helical span at residues 296–313 (FKIAVALAVAAIPEGLPA). Val304, Ala305, Ile307, and Glu309 together coordinate Ca(2+). Residues 314–756 (VITTCLALGT…EEGRAIYNNM (443 aa)) lie on the Cytoplasmic side of the membrane. The active-site 4-aspartylphosphate intermediate is the Asp351. Mg(2+) is bound by residues Asp351 and Thr353. Thr353 is a binding site for ATP. Residue Thr441 is modified to Phosphothreonine. Positions 442, 489, and 514 each coordinate ATP. Residue Ser531 is modified to Phosphoserine. An ATP-binding site is contributed by Arg559. The interval 575-594 (MHLKDSANFIKYETNLTFVG) is interaction with HAX1. Residue Ser580 is modified to Phosphoserine. ATP is bound by residues Thr624, Gly625, and Asp626. Ser663 carries the post-translational modification Phosphoserine. ATP contacts are provided by Arg677 and Lys683. A Mg(2+)-binding site is contributed by Asp702. Residue Asn705 participates in ATP binding. A helical transmembrane segment spans residues 757-776 (KQFIRYLISSNVGEVVCIFL). Residues Asn767 and Glu770 each coordinate Ca(2+). The Lumenal segment spans residues 777–786 (TAALGFPEAL). A helical transmembrane segment spans residues 787-807 (IPVQLLWVNLVTDGLPATALG). The interaction with PLN stretch occupies residues 787–807 (IPVQLLWVNLVTDGLPATALG). The interaction with TMEM64 and PDIA3 stretch occupies residues 788 to 1042 (PVQLLWVNLV…DTNFSDLLWS (255 aa)). Ca(2+)-binding residues include Asn795, Thr798, and Asp799. Residues 808–827 (FNPPDLDIMNKPPRNPKEPL) are Cytoplasmic-facing. A helical transmembrane segment spans residues 828 to 850 (ISGWLFFRYLAIGCYVGAATVGA). The Lumenal portion of the chain corresponds to 851–896 (AAWWFIAADGGPRVSFYQLSHFLQCKEDNPDFEGVDCAIFESPYPM). Cysteines 875 and 887 form a disulfide. A helical transmembrane segment spans residues 897–916 (TMALSVLVTIEMCNALNSLS). Glu907 contacts Ca(2+). Residues 917–929 (ENQSLLRMPPWEN) are Cytoplasmic-facing. Residues 930–948 (IWLVGSICLSMSLHFLILY) form a helical membrane-spanning segment. The segment at 931–942 (WLVGSICLSMSL) is interaction with PLN. Over 949 to 963 (VEPLPLIFQITPLNV) the chain is Lumenal. The helical transmembrane segment at 964-984 (TQWLMVLKISLPVILMDETLK) threads the bilayer. Topologically, residues 985-1042 (FVARNYLEPGKECVQPAPQSCSLWACTEGVSWPFVLLIVPLVMWVYSTDTNFSDLLWS) are cytoplasmic.

Belongs to the cation transport ATPase (P-type) (TC 3.A.3) family. Type IIA subfamily. In terms of assembly, interacts with sarcolipin (SLN); the interaction inhibits ATP2A2 Ca(2+) affinity. Interacts with phospholamban (PLN); the interaction inhibits ATP2A2 Ca(2+) affinity. Interacts with myoregulin (MRLN). Interacts with ARLN and ERLN; the interactions inhibit ATP2A2 Ca(2+) affinity. Interacts with SRTIT1/DWORF; the interaction results in activation of ATP2A2. Interacts with the monomeric forms of SLN, PLN, ARLN, ERLN and STRI1/DWORF. Interacts with HAX1. Interacts with S100A8 and S100A9. Interacts with SLC35G1 and STIM1. Interacts with TMEM203. Interacts with TMEM64 and PDIA3. Interacts with TMX1. Interacts with TMX2. Interacts with VMP1; VMP1 competes with PLN and SLN to prevent them from forming an inhibitory complex with ATP2A2. Interacts with ULK1. Interacts with TUNAR. Interacts with FLVCR2; this interaction occurs in the absence of heme and promotes ATP2A2 proteasomal degradation; this complex is dissociated upon heme binding. Interacts with FNIP1. As to quaternary structure, interacts with TRAM2 (via C-terminus). The cofactor is Mg(2+). In terms of processing, nitrated under oxidative stress. Nitration on the two tyrosine residues inhibits catalytic activity. Post-translationally, serotonylated on Gln residues by TGM2 in response to hypoxia, leading to its inactivation. In terms of tissue distribution, isoform 2 is highly expressed in heart and slow twitch skeletal muscle. Isoform 1 is widely expressed.

The protein localises to the endoplasmic reticulum membrane. It localises to the sarcoplasmic reticulum membrane. The enzyme catalyses Ca(2+)(in) + ATP + H2O = Ca(2+)(out) + ADP + phosphate + H(+). Has different conformational states with differential Ca2+ affinity. The E1 conformational state (active form) shows high Ca(2+) affinity, while the E2 state exhibits low Ca(2+) affinity. Binding of ATP allosterically increases its affinity for subsequent binding of Ca2+. Reversibly inhibited by phospholamban (PLN) at low calcium concentrations. PLN inhibits ATP2A2 Ca(2+) affinity by disrupting its allosteric activation by ATP. Inhibited by sarcolipin (SLN) and myoregulin (MRLN). The inhibition is blocked by VMP1. Enhanced by STRIT1/DWORF; STRIT1 increases activity by displacing sarcolipin (SLN), phospholamban (PLN) and myoregulin (MRLN). Stabilizes SERCA2 in its E2 state. This magnesium-dependent enzyme catalyzes the hydrolysis of ATP coupled with the translocation of calcium from the cytosol to the sarcoplasmic reticulum lumen. Involved in autophagy in response to starvation. Upon interaction with VMP1 and activation, controls ER-isolation membrane contacts for autophagosome formation. Also modulates ER contacts with lipid droplets, mitochondria and endosomes. In coordination with FLVCR2 mediates heme-stimulated switching from mitochondrial ATP synthesis to thermogenesis. Functionally, involved in the regulation of the contraction/relaxation cycle. Acts as a regulator of TNFSF11-mediated Ca(2+) signaling pathways via its interaction with TMEM64 which is critical for the TNFSF11-induced CREB1 activation and mitochondrial ROS generation necessary for proper osteoclast generation. Association between TMEM64 and SERCA2 in the ER leads to cytosolic Ca(2+) spiking for activation of NFATC1 and production of mitochondrial ROS, thereby triggering Ca(2+) signaling cascades that promote osteoclast differentiation and activation. In Oryctolagus cuniculus (Rabbit), this protein is Sarcoplasmic/endoplasmic reticulum calcium ATPase 2 (ATP2A2).